The chain runs to 292 residues: Shikimate dehydrogenase (NADP(+)) (292 aa).

Shikimate contacts are provided by residues serine 25 to serine 27 and threonine 72. Lysine 76 acts as the Proton acceptor in catalysis. Residues asparagine 97 and aspartate 113 each contribute to the shikimate site. NADP(+) contacts are provided by residues glycine 137–alanine 141, asparagine 161–lysine 166, and methionine 230. Tyrosine 232 is a shikimate binding site. Position 254 (glycine 254) interacts with NADP(+).

The protein belongs to the shikimate dehydrogenase family. Homodimer.

The enzyme catalyses shikimate + NADP(+) = 3-dehydroshikimate + NADPH + H(+). It functions in the pathway metabolic intermediate biosynthesis; chorismate biosynthesis; chorismate from D-erythrose 4-phosphate and phosphoenolpyruvate: step 4/7. Involved in the biosynthesis of the chorismate, which leads to the biosynthesis of aromatic amino acids. Catalyzes the reversible NADPH linked reduction of 3-dehydroshikimate (DHSA) to yield shikimate (SA). In Shewanella sp. (strain MR-7), this protein is Shikimate dehydrogenase (NADP(+)).